A 74-amino-acid chain; its full sequence is Salivary glue protein Sgs-7 (74 aa).

A signal peptide spans Met-1–Gly-23.

This chain is Salivary glue protein Sgs-7 (Sgs7), found in Drosophila melanogaster (Fruit fly).